Here is a 519-residue protein sequence, read N- to C-terminus: Serine/threonine-protein kinase RIO3 (519 aa).

Serine 8, serine 112, serine 125, serine 127, and serine 128 each carry phosphoserine. The segment at 122-159 (FEDSDSSEDEVDWQDTRDDPYRPAKPIPTPKKGFIGKG) is disordered. The segment covering 124–134 (DSDSSEDEVDW) has biased composition (acidic residues). The region spanning 251–519 (ETITGCISTG…DGSPPVLSAD (269 aa)) is the Protein kinase domain. ATP is bound by residues 257–265 (ISTGKESVV) and lysine 290. Aspartate 406 serves as the catalytic Proton acceptor. Serine 512 bears the Phosphoserine mark.

Belongs to the protein kinase superfamily. RIO-type Ser/Thr kinase family. Interacts with CASP10. Interacts with IRF3; RIOK3 probably mediates the interaction of TBK1 with IRF3. Associated with 40S pre-ribosomal particles. Mg(2+) serves as cofactor. Post-translationally, autophosphorylated (in vitro).

It is found in the cytoplasm. The enzyme catalyses L-seryl-[protein] + ATP = O-phospho-L-seryl-[protein] + ADP + H(+). It catalyses the reaction L-threonyl-[protein] + ATP = O-phospho-L-threonyl-[protein] + ADP + H(+). Involved in regulation of type I interferon (IFN)-dependent immune response which plays a critical role in the innate immune response against DNA and RNA viruses. May act as an adapter protein essential for the recruitment of TBK1 to IRF3. Phosphorylates IFIH1 on 'Ser-828' interfering with IFIH1 filament assembly on long dsRNA and resulting in attenuated IFIH1-signaling. Can inhibit CASP10 isoform 7-mediated activation of the NF-kappaB signaling pathway. May play a role in the biogenesis of the 40S ribosomal subunit. Involved in the processing of 21S pre-rRNA to the mature 18S rRNA. This chain is Serine/threonine-protein kinase RIO3 (Riok3), found in Mus musculus (Mouse).